Reading from the N-terminus, the 96-residue chain is Prokineticin Bm8-e (96 aa).

The signal sequence occupies residues 1 to 19; that stretch reads MKCFAQIVVLLLVIAFSHG. 5 disulfide bridges follow: C26-C38, C32-C50, C37-C78, C60-C86, and C80-C95.

It belongs to the AVIT (prokineticin) family. As to expression, expressed by the skin glands.

Its subcellular location is the secreted. Functionally, potent agonist for both PKR1/PROKR1 and PKR2/PROKR2, and inducer of a potent and long-lasting hyperalgesia. Also potentiates capsaicin-induced TRPV1 current, when tested on DRG neurons. At subnanomolar concentrations, this protein both induces potent chemotaxis of macrophages and stimulates LPS-induced production of the pro-inflammatory cytokines IL-1 and IL-12. In vivo, potently stimulates the contraction of the guinea-pig gastrointestinal (GI) smooth muscle (nanomolar concentration). This chain is Prokineticin Bm8-e, found in Bombina maxima (Giant fire-bellied toad).